Reading from the N-terminus, the 518-residue chain is Cytochrome P450 CYP72A219 (518 aa).

Residues 2–22 (ELVLKLISSFCAIVVVILLGW) form a helical membrane-spanning segment. Residue cysteine 465 coordinates heme.

It belongs to the cytochrome P450 family. It depends on heme as a cofactor.

The protein localises to the membrane. Its function is as follows. Probable heme-thiolate monooxygenase. This Panax ginseng (Korean ginseng) protein is Cytochrome P450 CYP72A219.